Here is a 305-residue protein sequence, read N- to C-terminus: tRNA uridine(34) hydroxylase (305 aa).

The 96-residue stretch at 124–219 (QDEETLVVDT…YLETIPKEES (96 aa)) folds into the Rhodanese domain. C179 (cysteine persulfide intermediate) is an active-site residue.

This sequence belongs to the TrhO family.

The enzyme catalyses uridine(34) in tRNA + AH2 + O2 = 5-hydroxyuridine(34) in tRNA + A + H2O. In terms of biological role, catalyzes oxygen-dependent 5-hydroxyuridine (ho5U) modification at position 34 in tRNAs. The chain is tRNA uridine(34) hydroxylase from Bartonella bacilliformis (strain ATCC 35685 / KC583 / Herrer 020/F12,63).